Here is a 176-residue protein sequence, read N- to C-terminus: MSLNNVPAGKSLPDDLYVVIEIPANADPIKYEVDKESGAVFVDRFMSAPMFYPCNYGYVNHTLSLDGDPVDVLVPTPYPLMPGSVIRCRPVGVLKMTDESGEDAKVVAVPHSKLSKEYDHIQDVNDLPELLKAQITHFFERYKELESGKWVKVDGWEDVEAARKEILDSYQRAQNK.

Substrate contacts are provided by lysine 30, arginine 44, and tyrosine 56. Mg(2+) contacts are provided by aspartate 66, aspartate 71, and aspartate 103. Tyrosine 142 lines the substrate pocket.

It belongs to the PPase family. As to quaternary structure, homohexamer. It depends on Mg(2+) as a cofactor.

It localises to the cytoplasm. The catalysed reaction is diphosphate + H2O = 2 phosphate + H(+). Its function is as follows. Catalyzes the hydrolysis of inorganic pyrophosphate (PPi) forming two phosphate ions. This chain is Inorganic pyrophosphatase, found in Vibrio vulnificus (strain CMCP6).